The primary structure comprises 200 residues: Phospholipase A2 inhibitor gamma subunit B (200 aa).

An N-terminal signal peptide occupies residues 1–19 (MKSFLFCCLLGTFLAIGMC). 8 cysteine pairs are disulfide-bonded: Cys-22–Cys-46, Cys-25–Cys-32, Cys-39–Cys-67, Cys-73–Cys-94, Cys-95–Cys-100, Cys-120–Cys-145, Cys-138–Cys-165, and Cys-171–Cys-191. Asn-33 carries an N-linked (GlcNAc...) asparagine glycan.

It belongs to the CNF-like-inhibitor family. As to quaternary structure, heterodimer of subunit A and subunit B. In terms of tissue distribution, expressed by the liver.

The protein resides in the secreted. In terms of biological role, inhibits the enzymatic activity of phospholipase A2 (PA2). This chain is Phospholipase A2 inhibitor gamma subunit B, found in Gloydius brevicaudus siniticus (Chinese mamushi).